The following is a 258-amino-acid chain: Indole-3-glycerol phosphate synthase (258 aa).

The protein belongs to the TrpC family.

The enzyme catalyses 1-(2-carboxyphenylamino)-1-deoxy-D-ribulose 5-phosphate + H(+) = (1S,2R)-1-C-(indol-3-yl)glycerol 3-phosphate + CO2 + H2O. It functions in the pathway amino-acid biosynthesis; L-tryptophan biosynthesis; L-tryptophan from chorismate: step 4/5. In Exiguobacterium sibiricum (strain DSM 17290 / CCUG 55495 / CIP 109462 / JCM 13490 / 255-15), this protein is Indole-3-glycerol phosphate synthase.